We begin with the raw amino-acid sequence, 609 residues long: Aminopeptidase ltah-1.1 (609 aa).

Residues 137–139 and 268–273 contribute to the substrate site; these read QCQ and PFGGME. His-297 contributes to the Zn(2+) binding site. Glu-298 acts as the Proton acceptor in catalysis. Residues His-301 and Glu-320 each contribute to the Zn(2+) site. Catalysis depends on Tyr-387, which acts as the Proton donor. Substrate is bound at residue 564-566; it reads RMK.

It belongs to the peptidase M1 family. It depends on Zn(2+) as a cofactor.

It is found in the cytoplasm. It carries out the reaction Release of N-terminal Arg and Lys from oligopeptides when P1' is not Pro. Also acts on arylamides of Arg and Lys.. Aminopeptidase which preferentially removes N-terminal Arg and Lys residues from peptides and proteins. This is Aminopeptidase ltah-1.1 from Caenorhabditis elegans.